We begin with the raw amino-acid sequence, 126 residues long: Histone H2B 1/2/3/4/6 (126 aa).

Over residues 1-12 (MPEPAKSAPAPK) the composition is skewed to low complexity. Residues 1–36 (MPEPAKSAPAPKKGSKKAVTKTQKKGDKKRKKSRKE) form a disordered region. N6-acetyllysine occurs at positions 6 and 13. Residues 13–34 (KGSKKAVTKTQKKGDKKRKKSR) are compositionally biased toward basic residues. Position 15 is a phosphoserine (Ser15). N6-acetyllysine occurs at positions 16 and 21. Lys121 is covalently cross-linked (Glycyl lysine isopeptide (Lys-Gly) (interchain with G-Cter in ubiquitin)).

The protein belongs to the histone H2B family. The nucleosome is a histone octamer containing two molecules each of H2A, H2B, H3 and H4 assembled in one H3-H4 heterotetramer and two H2A-H2B heterodimers. The octamer wraps approximately 147 bp of DNA. Post-translationally, monoubiquitination of Lys-121 by the BRE1 gives a specific tag for epigenetic transcriptional activation and is also prerequisite for histone H3 'Lys-4' and 'Lys-79' methylation. Phosphorylated on Ser-15 during apoptosis; which facilitates apoptotic chromatin condensation.

Its subcellular location is the nucleus. It is found in the chromosome. In terms of biological role, core component of nucleosome. Nucleosomes wrap and compact DNA into chromatin, limiting DNA accessibility to the cellular machineries which require DNA as a template. Histones thereby play a central role in transcription regulation, DNA repair, DNA replication and chromosomal stability. DNA accessibility is regulated via a complex set of post-translational modifications of histones, also called histone code, and nucleosome remodeling. Has broad-spectrum antibacterial activity. May be important in the antimicrobial defenses of chick reproductive system during follicle development in the ovary and egg formation in the oviduct. In Gallus gallus (Chicken), this protein is Histone H2B 1/2/3/4/6 (H2B-I).